The chain runs to 725 residues: Catalase-peroxidase (725 aa).

The tryptophyl-tyrosyl-methioninium (Trp-Tyr) (with M-237) cross-link spans 88 to 211; that stretch reads WHSAGTYRIQ…LAASEMGLIY (124 aa). The active-site Proton acceptor is the H89. A cross-link (tryptophyl-tyrosyl-methioninium (Tyr-Met) (with W-88)) is located at residues 211-237; sequence YVNPEGPGREPDPLKAAQQIRETFKRM. H252 contributes to the heme b binding site.

This sequence belongs to the peroxidase family. Peroxidase/catalase subfamily. As to quaternary structure, homodimer or homotetramer. It depends on heme b as a cofactor. Post-translationally, formation of the three residue Trp-Tyr-Met cross-link is important for the catalase, but not the peroxidase activity of the enzyme.

It carries out the reaction H2O2 + AH2 = A + 2 H2O. The enzyme catalyses 2 H2O2 = O2 + 2 H2O. In terms of biological role, bifunctional enzyme with both catalase and broad-spectrum peroxidase activity. The polypeptide is Catalase-peroxidase (Symbiobacterium thermophilum (strain DSM 24528 / JCM 14929 / IAM 14863 / T)).